The sequence spans 283 residues: 2-dehydro-3-deoxyphosphooctonate aldolase (283 aa).

Belongs to the KdsA family.

The protein localises to the cytoplasm. The enzyme catalyses D-arabinose 5-phosphate + phosphoenolpyruvate + H2O = 3-deoxy-alpha-D-manno-2-octulosonate-8-phosphate + phosphate. It participates in carbohydrate biosynthesis; 3-deoxy-D-manno-octulosonate biosynthesis; 3-deoxy-D-manno-octulosonate from D-ribulose 5-phosphate: step 2/3. Its pathway is bacterial outer membrane biogenesis; lipopolysaccharide biosynthesis. In Vibrio campbellii (strain ATCC BAA-1116), this protein is 2-dehydro-3-deoxyphosphooctonate aldolase.